The sequence spans 138 residues: Cysteine desulfuration protein SufE (138 aa).

Cysteine 51 functions as the Cysteine persulfide intermediate in the catalytic mechanism.

This sequence belongs to the SufE family. As to quaternary structure, homodimer. Interacts with SufS.

It localises to the cytoplasm. It participates in cofactor biosynthesis; iron-sulfur cluster biosynthesis. Its function is as follows. Participates in cysteine desulfuration mediated by SufS. Cysteine desulfuration mobilizes sulfur from L-cysteine to yield L-alanine and constitutes an essential step in sulfur metabolism for biosynthesis of a variety of sulfur-containing biomolecules. Functions as a sulfur acceptor for SufS, by mediating the direct transfer of the sulfur atom from the S-sulfanylcysteine of SufS, an intermediate product of cysteine desulfuration process. In Salmonella agona (strain SL483), this protein is Cysteine desulfuration protein SufE.